Here is a 514-residue protein sequence, read N- to C-terminus: Photosystem II CP47 reaction center protein (514 aa).

6 consecutive transmembrane segments (helical) span residues 21-36 (AVHLMHTALVLGWAGS), 109-123 (IVLSGLFFLAAVWHW), 148-164 (GGHLFLLGFLCFNFGTF), 211-226 (IAAGITLMIGGVFHLT), 245-260 (ALASAIAAVFGAAFVV), and 465-480 (CFALLFFFGHIWHGAR).

It belongs to the PsbB/PsbC family. PsbB subfamily. PSII is composed of 1 copy each of membrane proteins PsbA, PsbB, PsbC, PsbD, PsbE, PsbF, PsbH, PsbI, PsbJ, PsbK, PsbL, PsbM, PsbT, PsbX, PsbY, PsbZ, Psb30/Ycf12, peripheral proteins PsbO, CyanoQ (PsbQ), PsbU, PsbV and a large number of cofactors. It forms dimeric complexes. Binds multiple chlorophylls. PSII binds additional chlorophylls, carotenoids and specific lipids. serves as cofactor.

It is found in the cellular thylakoid membrane. One of the components of the core complex of photosystem II (PSII). It binds chlorophyll and helps catalyze the primary light-induced photochemical processes of PSII. PSII is a light-driven water:plastoquinone oxidoreductase, using light energy to abstract electrons from H(2)O, generating O(2) and a proton gradient subsequently used for ATP formation. In Prochlorothrix hollandica, this protein is Photosystem II CP47 reaction center protein.